Consider the following 84-residue polypeptide: Small ribosomal subunit protein bS16 (84 aa).

Belongs to the bacterial ribosomal protein bS16 family.

The chain is Small ribosomal subunit protein bS16 from Endomicrobium trichonymphae.